The chain runs to 387 residues: uncharacterized protein (387 aa).

It to M.jannaschii MJ0043 N-terminal region.

This is an uncharacterized protein from Bacillus subtilis (strain 168).